Consider the following 1070-residue polypeptide: DNA-directed RNA polymerase subunit beta (1070 aa).

This sequence belongs to the RNA polymerase beta chain family. In terms of assembly, in plastids the minimal PEP RNA polymerase catalytic core is composed of four subunits: alpha, beta, beta', and beta''. When a (nuclear-encoded) sigma factor is associated with the core the holoenzyme is formed, which can initiate transcription.

It localises to the plastid. Its subcellular location is the chloroplast. It carries out the reaction RNA(n) + a ribonucleoside 5'-triphosphate = RNA(n+1) + diphosphate. DNA-dependent RNA polymerase catalyzes the transcription of DNA into RNA using the four ribonucleoside triphosphates as substrates. The sequence is that of DNA-directed RNA polymerase subunit beta from Vitis vinifera (Grape).